We begin with the raw amino-acid sequence, 211 residues long: Small ribosomal subunit protein uS5 (211 aa).

Positions 1-41 are disordered; sequence MPGRERRDGGRSADDNKQNDRNERRGGGRRDDRRNQQQDER. Positions 44-107 constitute an S5 DRBM domain; it reads YIERVVTINR…EEARKNFFRV (64 aa).

Belongs to the universal ribosomal protein uS5 family. In terms of assembly, part of the 30S ribosomal subunit. Contacts proteins S4 and S8.

In terms of biological role, with S4 and S12 plays an important role in translational accuracy. Functionally, located at the back of the 30S subunit body where it stabilizes the conformation of the head with respect to the body. The polypeptide is Small ribosomal subunit protein uS5 (Corynebacterium glutamicum (strain R)).